The sequence spans 119 residues: Ribosome-binding factor A (119 aa).

It belongs to the RbfA family. As to quaternary structure, monomer. Binds 30S ribosomal subunits, but not 50S ribosomal subunits or 70S ribosomes.

The protein resides in the cytoplasm. In terms of biological role, one of several proteins that assist in the late maturation steps of the functional core of the 30S ribosomal subunit. Associates with free 30S ribosomal subunits (but not with 30S subunits that are part of 70S ribosomes or polysomes). Required for efficient processing of 16S rRNA. May interact with the 5'-terminal helix region of 16S rRNA. The chain is Ribosome-binding factor A from Citrifermentans bemidjiense (strain ATCC BAA-1014 / DSM 16622 / JCM 12645 / Bem) (Geobacter bemidjiensis).